Reading from the N-terminus, the 382-residue chain is G-box-binding factor 3 (382 aa).

Basic and acidic residues predominate over residues M1 to K16. Disordered regions lie at residues M1–N26, M97–L221, and E257–E285. Over residues T111 to N130 the composition is skewed to polar residues. The span at A155–S165 shows a compositional bias: basic and acidic residues. Positions E166–A181 are enriched in low complexity. Residues D182–K199 are compositionally biased toward basic and acidic residues. Residues V202 to D216 show a composition bias toward polar residues. Residues E259 to L322 enclose the bZIP domain. A basic motif region spans residues K261–K280. A leucine-zipper region spans residues L287–L322. A disordered region spans residues S329–G382. Positions D357 to L366 are enriched in polar residues.

It belongs to the bZIP family. DNA-binding heterodimer. Interacts with GBF4. Interacts with BZIP16 and BZIP68. Present only in dark grown leaves and roots.

Its subcellular location is the nucleus. In terms of biological role, binds to the G-box motif (5'-CCACGTGG-3') of the rbcS-1A gene promoter. G-box and G-box-like motifs are cis-acting elements defined in promoters of certain plant genes which are regulated by such diverse stimuli as light-induction or hormone control. The polypeptide is G-box-binding factor 3 (GBF3) (Arabidopsis thaliana (Mouse-ear cress)).